The following is a 583-amino-acid chain: Sensor protein SrrB (583 aa).

The Cytoplasmic portion of the chain corresponds to 1-11 (MMSRLNSVVIK). Residues 12-32 (LWLTIILIVTTVLILLSIALI) traverse the membrane as a helical segment. The Extracellular segment spans residues 33–174 (TFMQYYFTQE…SIEDTNNAIT (142 aa)). A helical membrane pass occupies residues 175 to 195 (IITIITAVIFLTITTVFAFFL). Topologically, residues 196–583 (SSRITKPLRR…TFIIKLPKPE (388 aa)) are cytoplasmic. One can recognise an HAMP domain in the interval 197-249 (SRITKPLRRLRDQATRVSEGDYSYKPSVTTKDEIGQLSQAFNQMSTEIEEHVD). The 218-residue stretch at 366-583 (NVSHELRTPI…TFIIKLPKPE (218 aa)) folds into the Histidine kinase domain. His369 carries the post-translational modification Phosphohistidine; by autocatalysis.

It is found in the cell membrane. The enzyme catalyses ATP + protein L-histidine = ADP + protein N-phospho-L-histidine.. Its function is as follows. Member of the two-component regulatory system SrrA/SrrB, which is involved in the global regulation of staphylococcal virulence factors in response to environmental oxygen levels as well as biofilm formation. Also plays an essential role in host-derived nitric oxide resistance by regulating hmp/flavohemoglobin, an enzyme that detoxifies nitric oxide by converting it to nitrate. Functions as a sensor protein kinase which is autophosphorylated at a histidine residue and transfers its phosphate group to SrrA. In turn, SrrA binds to the upstream promoter regions of the target genes to positively and negatively regulate their expression. The chain is Sensor protein SrrB (srrB) from Staphylococcus aureus (strain Mu50 / ATCC 700699).